The primary structure comprises 305 residues: MLKQRTIKQIVKTVGIGLHSGRKVELTLRPAAPDTGIVFSRVDLATPVDIPASAMAIGDTRMASVLQKDGARVSTIEHLMSACAGLGIDNLYIDVTAEEIPIMDGSAGSFVFLIQSAGIEEQNAAKKFIKVTKPVEIRDGDKFARLDPYFGFKLKFTIDFRHPAVDKTGQALEVDFANTSYVREIARARTFGFAHEVEMMRELGLARGGSMDNAIVLDEYRILNNDGLRYDDEFVKHKMLDAIGDLYVIGHPLLAAYDAYKSGHGLNNALLRELLAHEDSYEIVTFDDTQKAPRGFAYETQTAFA.

Zn(2+)-binding residues include H78, H237, and D241. The active-site Proton donor is the H264.

It belongs to the LpxC family. It depends on Zn(2+) as a cofactor.

It carries out the reaction a UDP-3-O-[(3R)-3-hydroxyacyl]-N-acetyl-alpha-D-glucosamine + H2O = a UDP-3-O-[(3R)-3-hydroxyacyl]-alpha-D-glucosamine + acetate. Its pathway is glycolipid biosynthesis; lipid IV(A) biosynthesis; lipid IV(A) from (3R)-3-hydroxytetradecanoyl-[acyl-carrier-protein] and UDP-N-acetyl-alpha-D-glucosamine: step 2/6. Its function is as follows. Catalyzes the hydrolysis of UDP-3-O-myristoyl-N-acetylglucosamine to form UDP-3-O-myristoylglucosamine and acetate, the committed step in lipid A biosynthesis. The protein is UDP-3-O-acyl-N-acetylglucosamine deacetylase of Paraburkholderia phytofirmans (strain DSM 17436 / LMG 22146 / PsJN) (Burkholderia phytofirmans).